The sequence spans 274 residues: Diaminopimelate epimerase (274 aa).

The substrate site is built by N11 and N62. Catalysis depends on C71, which acts as the Proton donor. Residues 72 to 73 (GN), N157, N190, and 208 to 209 (ER) contribute to the substrate site. The active-site Proton acceptor is the C217. 218 to 219 (GT) serves as a coordination point for substrate.

It belongs to the diaminopimelate epimerase family. Homodimer.

Its subcellular location is the cytoplasm. It catalyses the reaction (2S,6S)-2,6-diaminopimelate = meso-2,6-diaminopimelate. Its pathway is amino-acid biosynthesis; L-lysine biosynthesis via DAP pathway; DL-2,6-diaminopimelate from LL-2,6-diaminopimelate: step 1/1. In terms of biological role, catalyzes the stereoinversion of LL-2,6-diaminopimelate (L,L-DAP) to meso-diaminopimelate (meso-DAP), a precursor of L-lysine and an essential component of the bacterial peptidoglycan. The sequence is that of Diaminopimelate epimerase from Elusimicrobium minutum (strain Pei191).